The primary structure comprises 629 residues: tRNA uridine 5-carboxymethylaminomethyl modification enzyme MnmG (629 aa).

Residues 13 to 18 (GGGHAG), V125, and S180 contribute to the FAD site. 273–287 (GPRYCPSIEDKVMRF) serves as a coordination point for NAD(+). Position 370 (Q370) interacts with FAD.

It belongs to the MnmG family. Homodimer. Heterotetramer of two MnmE and two MnmG subunits. FAD serves as cofactor.

Its subcellular location is the cytoplasm. NAD-binding protein involved in the addition of a carboxymethylaminomethyl (cmnm) group at the wobble position (U34) of certain tRNAs, forming tRNA-cmnm(5)s(2)U34. This Enterobacter sp. (strain 638) protein is tRNA uridine 5-carboxymethylaminomethyl modification enzyme MnmG.